A 511-amino-acid polypeptide reads, in one-letter code: Signal transduction histidine-protein kinase/phosphatase MprB (511 aa).

Topologically, residues 1–26 (MVGFRRGPRAPLRATSSLSLRWRVML) are cytoplasmic. Residues 27 to 47 (LAMSMVAMVVVLMSFAVYAVI) form a helical membrane-spanning segment. Topologically, residues 48–163 (SAALYSDIDN…PTEAVMTKLR (116 aa)) are extracellular. A helical membrane pass occupies residues 164–184 (AVLLIVGGVGVAVAAVAGGMV). At 185–511 (TRAGLRPVGR…SVDSQSARAR (327 aa)) the chain is on the cytoplasmic side. The 53-residue stretch at 186–238 (RAGLRPVGRLTEAAERVARTDDLRPIPVFGSDELARLTEAFNLMLRALAESRE) folds into the HAMP domain. Positions 246-466 (DAGHELRTPL…AICMLLPGRP (221 aa)) constitute a Histidine kinase domain. His-249 carries the phosphohistidine; by autocatalysis modification. The segment at 468-511 (PDSAYPAAPDDKKTEPVDTRGANGANSRGSANVISVDSQSARAR) is disordered. The segment covering 476 to 485 (PDDKKTEPVD) has biased composition (basic and acidic residues). A compositionally biased stretch (polar residues) spans 491–511 (GANSRGSANVISVDSQSARAR).

It depends on Mg(2+) as a cofactor. Mn(2+) is required as a cofactor. In terms of processing, autophosphorylated.

It localises to the cell membrane. It carries out the reaction ATP + protein L-histidine = ADP + protein N-phospho-L-histidine.. In terms of biological role, member of the two-component regulatory system MprB/MprA which contributes to maintaining a balance among several systems involved in stress resistance and is required for establishment and maintenance of persistent infection in the host. In response to environmental signals MprB acts both as a membrane-associated protein kinase that undergoes autophosphorylation and subsequently transfers the phosphate to MprA, and a protein phosphatase that dephosphorylates phospho-MprA. The sequence is that of Signal transduction histidine-protein kinase/phosphatase MprB (mprB) from Mycobacterium ulcerans (strain Agy99).